Here is a 258-residue protein sequence, read N- to C-terminus: Microtubule-associated protein RP/EB family member 1 (258 aa).

Residues Asn-14–Asp-116 form the Calponin-homology (CH) domain. Residues Lys-175–Ile-245 enclose the EB1 C-terminal domain.

This sequence belongs to the MAPRE family.

The protein resides in the cytoplasm. It localises to the cytoskeleton. It is found in the microtubule organizing center. Its subcellular location is the centrosome. The protein localises to the golgi apparatus. The protein resides in the spindle. It localises to the spindle pole. In terms of biological role, plus-end tracking protein (+TIP) that binds to the plus-end of microtubules and regulates the dynamics of the microtubule cytoskeleton. Promotes cytoplasmic microtubule nucleation and elongation. Involved in mitotic spindle positioning by stabilizing microtubules and promoting dynamic connection between astral microtubules and the cortex during mitotic chromosome segregation. The protein is Microtubule-associated protein RP/EB family member 1 (MAPRE1) of Gallus gallus (Chicken).